The chain runs to 139 residues: DNA-directed RNA polymerase II subunit Rpb4 (139 aa).

This sequence belongs to the eukaryotic RPB4 RNA polymerase subunit family. In terms of assembly, RNA polymerase II consists of 12 different subunits.

It localises to the nucleus. The protein resides in the chromosome. Its function is as follows. DNA-dependent RNA polymerase catalyzes the transcription of DNA into RNA using the four ribonucleoside triphosphates as substrates. Associates with POLR2G. The protein is DNA-directed RNA polymerase II subunit Rpb4 of Drosophila melanogaster (Fruit fly).